We begin with the raw amino-acid sequence, 237 residues long: Pyridoxine 5'-phosphate synthase (237 aa).

Residues Asn7 and Arg18 each coordinate 3-amino-2-oxopropyl phosphate. The Proton acceptor role is filled by His43. Positions 45 and 50 each coordinate 1-deoxy-D-xylulose 5-phosphate. Glu70 acts as the Proton acceptor in catalysis. 1-deoxy-D-xylulose 5-phosphate is bound at residue Thr100. The active-site Proton donor is His190. Residues Asp191 and 213 to 214 (GH) contribute to the 3-amino-2-oxopropyl phosphate site.

This sequence belongs to the PNP synthase family. In terms of assembly, homooctamer; tetramer of dimers.

The protein resides in the cytoplasm. The enzyme catalyses 3-amino-2-oxopropyl phosphate + 1-deoxy-D-xylulose 5-phosphate = pyridoxine 5'-phosphate + phosphate + 2 H2O + H(+). The protein operates within cofactor biosynthesis; pyridoxine 5'-phosphate biosynthesis; pyridoxine 5'-phosphate from D-erythrose 4-phosphate: step 5/5. Functionally, catalyzes the complicated ring closure reaction between the two acyclic compounds 1-deoxy-D-xylulose-5-phosphate (DXP) and 3-amino-2-oxopropyl phosphate (1-amino-acetone-3-phosphate or AAP) to form pyridoxine 5'-phosphate (PNP) and inorganic phosphate. This chain is Pyridoxine 5'-phosphate synthase, found in Christiangramia forsetii (strain DSM 17595 / CGMCC 1.15422 / KT0803) (Gramella forsetii).